The following is a 305-amino-acid chain: Heme A synthase (305 aa).

The Cytoplasmic portion of the chain corresponds to 1–6 (MKKFLK). Residues 7-27 (VWSVLTIICMTVVVFGGALVT) traverse the membrane as a helical segment. Residues 28–63 (KTGSADGCGNSWPLCNGQLVRLTDVTPEKLIEFMHR) are Extracellular-facing. The cysteines at positions 35 and 42 are disulfide-linked. E59 is an active-site residue. H62 serves as a coordination point for heme o. A helical transmembrane segment spans residues 64-84 (MTTGISSIFVIVLAICAWIYM). The Cytoplasmic segment spans residues 85 to 92 (KNRRETKP). A helical membrane pass occupies residues 93–113 (LAIIAVLFLIIQALMGMAAVV). The Extracellular portion of the chain corresponds to 114-122 (WGQNPYIMA). A helical transmembrane segment spans residues 123-143 (LHFGISIICYASIVLLALMIF). H124 provides a ligand contact to heme o. Topologically, residues 144–160 (EVDRKFDARNLVMGTKL) are cytoplasmic. The chain crosses the membrane as a helical span at residues 161–181 (RINIYALTIYTYLAVYTGALV). Topologically, residues 182-212 (RHEKASMAVPVWPFENGKFIMPDSVQDYVQY) are extracellular. Residues 213–233 (FHRVAAFILIVWLLYVTWLVF) traverse the membrane as a helical segment. Heme b is bound at residue H214. The Cytoplasmic portion of the chain corresponds to 234–240 (RDYRRYR). A helical transmembrane segment spans residues 241 to 261 (VLTFSMVLSLLFIALQAVTGA). At 262-271 (LSVYTGVNLY) the chain is on the extracellular side. Residues 272–292 (IALAHSLIITMLFALLCYLCL) traverse the membrane as a helical segment. H276 contacts heme b. Over 293-305 (LASRSKSNRLRIK) the chain is Cytoplasmic.

The protein belongs to the COX15/CtaA family. Type 1 subfamily. Interacts with CtaB. Requires heme b as cofactor.

Its subcellular location is the cell membrane. The enzyme catalyses Fe(II)-heme o + 2 A + H2O = Fe(II)-heme a + 2 AH2. It participates in porphyrin-containing compound metabolism; heme A biosynthesis; heme A from heme O: step 1/1. In terms of biological role, catalyzes the conversion of heme O to heme A by two successive hydroxylations of the methyl group at C8. The first hydroxylation forms heme I, the second hydroxylation results in an unstable dihydroxymethyl group, which spontaneously dehydrates, resulting in the formyl group of heme A. The protein is Heme A synthase of Listeria welshimeri serovar 6b (strain ATCC 35897 / DSM 20650 / CCUG 15529 / CIP 8149 / NCTC 11857 / SLCC 5334 / V8).